Reading from the N-terminus, the 2512-residue chain is Probable polyketide synthase 5 (2512 aa).

One can recognise a Ketosynthase family 3 (KS3) domain in the interval 17-447; sequence MKGVAIVGIG…GSNCCLLISE (431 aa). Residues Cys-187, His-329, and His-368 each act as for beta-ketoacyl synthase activity in the active site. Residues 638 to 671 form an acyl/malonyl transferase region; that stretch reads GVNPSFILGHSLGEIPTSYCSGMIDLDTFCYTVY. Ser-648 (for acyl/malonyl transferase activity) is an active-site residue. An N-terminal hotdog fold region spans residues 928-1050; that stretch reads IDHLGLSNSY…ANFQLLDHTI (123 aa). A PKS/mFAS DH domain is found at 928-1210; the sequence is IDHLGLSNSY…SKSLIPIKEL (283 aa). Residue His-962 is the Proton acceptor; for dehydratase activity of the active site. The segment at 1067 to 1210 is C-terminal hotdog fold; it reads TLARLTKNEI…SKSLIPIKEL (144 aa). Asp-1125 (proton donor; for dehydratase activity) is an active-site residue. Residues 2430–2507 enclose the Carrier domain; sequence AGSKNVDELF…VSIKIILNFL (78 aa). Ser-2467 bears the O-(pantetheine 4'-phosphoryl)serine mark.

The cofactor is pantetheine 4'-phosphate.

In terms of biological role, probable polyketide synthase. This is Probable polyketide synthase 5 (pks5) from Dictyostelium discoideum (Social amoeba).